The primary structure comprises 354 residues: Phosphoribosylformylglycinamidine cyclo-ligase (354 aa).

Belongs to the AIR synthase family.

The protein localises to the cytoplasm. The catalysed reaction is 2-formamido-N(1)-(5-O-phospho-beta-D-ribosyl)acetamidine + ATP = 5-amino-1-(5-phospho-beta-D-ribosyl)imidazole + ADP + phosphate + H(+). It functions in the pathway purine metabolism; IMP biosynthesis via de novo pathway; 5-amino-1-(5-phospho-D-ribosyl)imidazole from N(2)-formyl-N(1)-(5-phospho-D-ribosyl)glycinamide: step 2/2. The protein is Phosphoribosylformylglycinamidine cyclo-ligase of Synechococcus sp. (strain JA-2-3B'a(2-13)) (Cyanobacteria bacterium Yellowstone B-Prime).